Consider the following 356-residue polypeptide: Histidinol-phosphate aminotransferase (356 aa).

At K214 the chain carries N6-(pyridoxal phosphate)lysine.

Belongs to the class-II pyridoxal-phosphate-dependent aminotransferase family. Histidinol-phosphate aminotransferase subfamily. Homodimer. Pyridoxal 5'-phosphate serves as cofactor.

The catalysed reaction is L-histidinol phosphate + 2-oxoglutarate = 3-(imidazol-4-yl)-2-oxopropyl phosphate + L-glutamate. Its pathway is amino-acid biosynthesis; L-histidine biosynthesis; L-histidine from 5-phospho-alpha-D-ribose 1-diphosphate: step 7/9. The chain is Histidinol-phosphate aminotransferase from Shigella sonnei (strain Ss046).